A 337-amino-acid chain; its full sequence is Tetraacyldisaccharide 4'-kinase (337 aa).

52-59 (TLGGAGKT) serves as a coordination point for ATP.

It belongs to the LpxK family.

The catalysed reaction is a lipid A disaccharide + ATP = a lipid IVA + ADP + H(+). It functions in the pathway glycolipid biosynthesis; lipid IV(A) biosynthesis; lipid IV(A) from (3R)-3-hydroxytetradecanoyl-[acyl-carrier-protein] and UDP-N-acetyl-alpha-D-glucosamine: step 6/6. Its function is as follows. Transfers the gamma-phosphate of ATP to the 4'-position of a tetraacyldisaccharide 1-phosphate intermediate (termed DS-1-P) to form tetraacyldisaccharide 1,4'-bis-phosphate (lipid IVA). This chain is Tetraacyldisaccharide 4'-kinase, found in Methylobacterium nodulans (strain LMG 21967 / CNCM I-2342 / ORS 2060).